The following is a 62-amino-acid chain: Small ribosomal subunit protein eS27 (62 aa).

The Zn(2+) site is built by C17, C20, C36, and C39. A C4-type zinc finger spans residues 17–39 (CPDCDNEQTVFSKASTTVKCVVC).

It belongs to the eukaryotic ribosomal protein eS27 family. Part of the 30S ribosomal subunit. Zn(2+) serves as cofactor.

The sequence is that of Small ribosomal subunit protein eS27 from Methanoregula boonei (strain DSM 21154 / JCM 14090 / 6A8).